A 185-amino-acid polypeptide reads, in one-letter code: NAD(P)H-quinone oxidoreductase subunit J (185 aa).

The protein belongs to the complex I 30 kDa subunit family. As to quaternary structure, NDH-1 can be composed of about 15 different subunits; different subcomplexes with different compositions have been identified which probably have different functions.

The protein localises to the cellular thylakoid membrane. The catalysed reaction is a plastoquinone + NADH + (n+1) H(+)(in) = a plastoquinol + NAD(+) + n H(+)(out). It catalyses the reaction a plastoquinone + NADPH + (n+1) H(+)(in) = a plastoquinol + NADP(+) + n H(+)(out). Its function is as follows. NDH-1 shuttles electrons from an unknown electron donor, via FMN and iron-sulfur (Fe-S) centers, to quinones in the respiratory and/or the photosynthetic chain. The immediate electron acceptor for the enzyme in this species is believed to be plastoquinone. Couples the redox reaction to proton translocation, and thus conserves the redox energy in a proton gradient. Cyanobacterial NDH-1 also plays a role in inorganic carbon-concentration. The sequence is that of NAD(P)H-quinone oxidoreductase subunit J from Prochlorococcus marinus (strain MIT 9303).